Consider the following 316-residue polypeptide: Ornithine carbamoyltransferase (316 aa).

Carbamoyl phosphate is bound by residues S57–T60, Q84, R108, and H135–Q138. L-ornithine-binding positions include N166, D230, and S234–M235. Carbamoyl phosphate is bound by residues C269–L270 and R297.

Belongs to the aspartate/ornithine carbamoyltransferase superfamily. OTCase family.

Its subcellular location is the cytoplasm. The enzyme catalyses carbamoyl phosphate + L-ornithine = L-citrulline + phosphate + H(+). Its pathway is amino-acid degradation; L-arginine degradation via ADI pathway; carbamoyl phosphate from L-arginine: step 2/2. Functionally, reversibly catalyzes the transfer of the carbamoyl group from carbamoyl phosphate (CP) to the N(epsilon) atom of ornithine (ORN) to produce L-citrulline. The polypeptide is Ornithine carbamoyltransferase (Bacillus cereus (strain 03BB102)).